Reading from the N-terminus, the 78-residue chain is Acyl carrier protein (78 aa).

One can recognise a Carrier domain in the interval 2 to 77; the sequence is SDTADRVQKI…DATKYIEEHK (76 aa). Position 37 is an O-(pantetheine 4'-phosphoryl)serine (Ser37).

It belongs to the acyl carrier protein (ACP) family. Post-translationally, 4'-phosphopantetheine is transferred from CoA to a specific serine of apo-ACP by AcpS. This modification is essential for activity because fatty acids are bound in thioester linkage to the sulfhydryl of the prosthetic group.

It is found in the cytoplasm. It participates in lipid metabolism; fatty acid biosynthesis. In terms of biological role, carrier of the growing fatty acid chain in fatty acid biosynthesis. This is Acyl carrier protein from Erythrobacter litoralis (strain HTCC2594).